We begin with the raw amino-acid sequence, 521 residues long: Methionine--tRNA ligase (521 aa).

Residues 14-24 (YYSSGNPHIGH) carry the 'HIGH' region motif. Zn(2+)-binding residues include C129, C132, C151, and H155. Residues 306-310 (KMSKS) carry the 'KMSKS' region motif. K309 lines the ATP pocket.

The protein belongs to the class-I aminoacyl-tRNA synthetase family. MetG type 2A subfamily. As to quaternary structure, monomer. Zn(2+) serves as cofactor.

The protein localises to the cytoplasm. The enzyme catalyses tRNA(Met) + L-methionine + ATP = L-methionyl-tRNA(Met) + AMP + diphosphate. Its function is as follows. Is required not only for elongation of protein synthesis but also for the initiation of all mRNA translation through initiator tRNA(fMet) aminoacylation. The sequence is that of Methionine--tRNA ligase from Ureaplasma parvum serovar 3 (strain ATCC 700970).